The following is a 441-amino-acid chain: Glutamate--tRNA ligase 1 (441 aa).

Positions 9–19 (PSPTGFIHVGN) match the 'HIGH' region motif. The 'KMSKS' region motif lies at 239–243 (ALSKR). Lys242 contributes to the ATP binding site.

The protein belongs to the class-I aminoacyl-tRNA synthetase family. Glutamate--tRNA ligase type 1 subfamily. As to quaternary structure, monomer.

Its subcellular location is the cytoplasm. It catalyses the reaction tRNA(Glu) + L-glutamate + ATP = L-glutamyl-tRNA(Glu) + AMP + diphosphate. Its function is as follows. Catalyzes the attachment of glutamate to tRNA(Glu) in a two-step reaction: glutamate is first activated by ATP to form Glu-AMP and then transferred to the acceptor end of tRNA(Glu). The sequence is that of Glutamate--tRNA ligase 1 from Cereibacter sphaeroides (strain ATCC 17025 / ATH 2.4.3) (Rhodobacter sphaeroides).